The following is a 187-amino-acid chain: Elongation factor P (187 aa).

It belongs to the elongation factor P family.

It is found in the cytoplasm. Its pathway is protein biosynthesis; polypeptide chain elongation. Functionally, involved in peptide bond synthesis. Stimulates efficient translation and peptide-bond synthesis on native or reconstituted 70S ribosomes in vitro. Probably functions indirectly by altering the affinity of the ribosome for aminoacyl-tRNA, thus increasing their reactivity as acceptors for peptidyl transferase. The chain is Elongation factor P from Jannaschia sp. (strain CCS1).